Here is a 334-residue protein sequence, read N- to C-terminus: G-protein coupled receptor 12 (334 aa).

At 1–48 (MNEDLKVNLSGLPRDYLDAAAAENISAAVSSRVPAVEPEPELVVNPWD) the chain is on the extracellular side. 2 N-linked (GlcNAc...) asparagine glycosylation sites follow: Asn8 and Asn24. A helical membrane pass occupies residues 49–69 (IVLCTSGTLISCENAIVVLII). Topologically, residues 70-77 (FHNPSLRA) are cytoplasmic. The helical transmembrane segment at 78–98 (PMFLLIGSLALADLLAGIGLI) threads the bilayer. The Extracellular portion of the chain corresponds to 99-113 (TNFVFAYLLQSEATK). A helical membrane pass occupies residues 114–134 (LVTIGLIVASFSASVCSLLAI). Residues 135–158 (TVDRYLSLYYALTYHSERTVTFTY) are Cytoplasmic-facing. A helical membrane pass occupies residues 159–179 (VMLVMLWGTSICLGLLPVMGW). At 180 to 199 (NCLRDESTCSVVRPLTKNNA) the chain is on the extracellular side. Residues 200 to 220 (AILSVSFLFMFALMLQLYIQI) traverse the membrane as a helical segment. Topologically, residues 221–252 (CKIVMRHAHQIALQHHFLATSHYVTTRKGVST) are cytoplasmic. A helical transmembrane segment spans residues 253 to 273 (LAIILGTFAACWMPFTLYSLI). Residues 274–282 (ADYTYPSIY) are Extracellular-facing. Residues 283–303 (TYATLLPATYNSIINPVIYAF) traverse the membrane as a helical segment. The Cytoplasmic portion of the chain corresponds to 304–334 (RNQEIQKALCLICCGCIPSSLAQRARSPSDV). The S-palmitoyl cysteine moiety is linked to residue Cys317. Phosphoserine occurs at positions 330 and 332.

The protein belongs to the G-protein coupled receptor 1 family.

Its subcellular location is the cell membrane. In terms of biological role, promotes neurite outgrowth and blocks myelin inhibition in neurons. Receptor with constitutive G(s) signaling activity that stimulates cyclic AMP production. The polypeptide is G-protein coupled receptor 12 (GPR12) (Homo sapiens (Human)).